Here is a 1683-residue protein sequence, read N- to C-terminus: E3 ubiquitin-protein ligase SHPRH (1683 aa).

Residues 1 to 43 (MSSRRKRAPPVRVDEEKRQQLHWNMHEDRRNEPIIISDDDEQP) are disordered. Residues 12–32 (RVDEEKRQQLHWNMHEDRRNE) are compositionally biased toward basic and acidic residues. At serine 266 the chain carries Phosphoserine. The Helicase ATP-binding; first part domain maps to 307 to 389 (YQREAVNWML…TVEVLALILT (83 aa)). ATP is bound at residue 373–380 (DEMGLGKT). One can recognise an H15 domain in the interval 438 to 512 (QCPPTRVMIL…GFSGTFTLGK (75 aa)). Residues 525–607 (KQAVGSPRKI…QGHCPATSDS (83 aa)) are disordered. The span at 534 to 547 (IQKETRKSGNKDTD) shows a compositional bias: basic and acidic residues. Basic residues predominate over residues 568–588 (KSRRNRSKLRKKLVPSTKKGK). Residue serine 635 is modified to Phosphoserine. The PHD-type zinc-finger motif lies at 658–709 (RFECICGELDQIDRKPRVQCLKCHLWQHAKCVNYDEKNLKIKPFYCPHCLVA). The Helicase ATP-binding; second part domain maps to 710-868 (MEPVSTRATL…FGLVVFLGIE (159 aa)). Positions 819-822 (DEAQ) match the DEAQ box motif. The RING-type zinc-finger motif lies at 1432 to 1479 (CPICARQLGKQWAVLTCGHCFCNECISIIIEQYSVGSHRSSIKCAICR). The region spanning 1514–1672 (AVVRTLMKIQ…ASVLTVADLA (159 aa)) is the Helicase C-terminal domain.

Belongs to the SNF2/RAD54 helicase family. Homodimer. Interacts with HLTF, PCNA, UBE2N and RAD18. In terms of tissue distribution, broadly expressed.

It carries out the reaction S-ubiquitinyl-[E2 ubiquitin-conjugating enzyme]-L-cysteine + [acceptor protein]-L-lysine = [E2 ubiquitin-conjugating enzyme]-L-cysteine + N(6)-ubiquitinyl-[acceptor protein]-L-lysine.. The protein operates within protein modification; protein ubiquitination. Functionally, E3 ubiquitin-protein ligase involved in DNA repair. Upon genotoxic stress, accepts ubiquitin from the UBE2N-UBE2V2 E2 complex and transfers it to 'Lys-164' of PCNA which had been monoubiquitinated by UBE2A/B-RAD18, promoting the formation of non-canonical poly-ubiquitin chains linked through 'Lys-63'. This chain is E3 ubiquitin-protein ligase SHPRH (SHPRH), found in Homo sapiens (Human).